Consider the following 146-residue polypeptide: Protein PBDC1 homolog (146 aa).

This sequence belongs to the PBDC1 family.

Its subcellular location is the cytoplasm. The chain is Protein PBDC1 homolog from Saccharomyces cerevisiae (strain ATCC 204508 / S288c) (Baker's yeast).